The sequence spans 585 residues: Proline--tRNA ligase (585 aa).

The protein belongs to the class-II aminoacyl-tRNA synthetase family. ProS type 1 subfamily. Homodimer.

The protein resides in the cytoplasm. The enzyme catalyses tRNA(Pro) + L-proline + ATP = L-prolyl-tRNA(Pro) + AMP + diphosphate. In terms of biological role, catalyzes the attachment of proline to tRNA(Pro) in a two-step reaction: proline is first activated by ATP to form Pro-AMP and then transferred to the acceptor end of tRNA(Pro). As ProRS can inadvertently accommodate and process non-cognate amino acids such as alanine and cysteine, to avoid such errors it has two additional distinct editing activities against alanine. One activity is designated as 'pretransfer' editing and involves the tRNA(Pro)-independent hydrolysis of activated Ala-AMP. The other activity is designated 'posttransfer' editing and involves deacylation of mischarged Ala-tRNA(Pro). The misacylated Cys-tRNA(Pro) is not edited by ProRS. This chain is Proline--tRNA ligase, found in Nocardia farcinica (strain IFM 10152).